The following is a 593-amino-acid chain: Scarecrow-like protein 1 (593 aa).

2 disordered regions span residues 29-61 (NPKLYTLNENGNNNGVSSAQIFDPDRSKNPCLT) and 188-216 (YQNESEQHQDSPKESSSADSNSHVSSKEV). A compositionally biased stretch (polar residues) spans 35–48 (LNENGNNNGVSSAQ). Positions 202–211 (SSSADSNSHV) are enriched in low complexity. Positions 213–593 (SKEVVSQATP…KSLIVASAWR (381 aa)) constitute a GRAS domain. The tract at residues 220-280 (ATPKQILISC…AARMAASGKF (61 aa)) is leucine repeat I (LRI). The interval 299–364 (MQVLFEVCPC…GKRPRLRLTG (66 aa)) is VHIID. Positions 330–334 (VHIID) match the VHIID motif. The tract at residues 380–411 (IIGLRLEQLAEDNGVSFKFKAMPSKTSIVSPS) is leucine repeat II (LRII). A PFYRE region spans residues 421-515 (LIVNFAFQLH…RQCLARDIVN (95 aa)). Positions 518–593 (ACEGEERIER…KSLIVASAWR (76 aa)) are SAW.

The protein belongs to the GRAS family. As to expression, expressed in seedlings, roots, shoots, leaves, flowers and siliques.

It is found in the nucleus. In terms of biological role, probable transcription factor involved in plant development. The sequence is that of Scarecrow-like protein 1 (SCL1) from Arabidopsis thaliana (Mouse-ear cress).